The chain runs to 185 residues: Ribosome-recycling factor (185 aa).

It belongs to the RRF family.

It localises to the cytoplasm. In terms of biological role, responsible for the release of ribosomes from messenger RNA at the termination of protein biosynthesis. May increase the efficiency of translation by recycling ribosomes from one round of translation to another. The chain is Ribosome-recycling factor from Salinispora tropica (strain ATCC BAA-916 / DSM 44818 / JCM 13857 / NBRC 105044 / CNB-440).